The chain runs to 217 residues: Ribonuclease HII 2 (217 aa).

Positions 28–217 constitute an RNase H type-2 domain; that stretch reads GLLAGVDEAG…VREVLLERRP (190 aa). Residues Asp-34, Glu-35, and Asp-126 each coordinate a divalent metal cation.

The protein belongs to the RNase HII family. The cofactor is Mn(2+). Mg(2+) serves as cofactor.

It is found in the cytoplasm. The enzyme catalyses Endonucleolytic cleavage to 5'-phosphomonoester.. Its function is as follows. Endonuclease that specifically degrades the RNA of RNA-DNA hybrids. The sequence is that of Ribonuclease HII 2 from Methylibium petroleiphilum (strain ATCC BAA-1232 / LMG 22953 / PM1).